Here is a 561-residue protein sequence, read N- to C-terminus: Long-chain-fatty-acid--CoA ligase (561 aa).

An ATP-binding site is contributed by 213-224 (YTGGTTGVAKGA).

The protein belongs to the ATP-dependent AMP-binding enzyme family. Mg(2+) serves as cofactor.

Its subcellular location is the membrane. It carries out the reaction a long-chain fatty acid + ATP + CoA = a long-chain fatty acyl-CoA + AMP + diphosphate. Its pathway is lipid metabolism; fatty acid beta-oxidation. Functionally, catalyzes the esterification, concomitant with transport, of exogenous long-chain fatty acids into metabolically active CoA thioesters for subsequent degradation or incorporation into phospholipids. This Escherichia coli O157:H7 protein is Long-chain-fatty-acid--CoA ligase (fadD).